A 436-amino-acid polypeptide reads, in one-letter code: Coiled-coil domain-containing protein 71 (436 aa).

Residues 95–119 are disordered; the sequence is ATSLPARAPQTAKSVPTGQTTLLPV. Residues 105–116 are compositionally biased toward polar residues; it reads TAKSVPTGQTTL. Ser129 carries the post-translational modification Phosphoserine. 2 disordered regions span residues 210–258 and 314–405; these read LRKG…MKGR and ALRG…KVDR. Residues 264-334 are a coiled coil; it reads KTVRGKAPRT…QAKAKAARTK (71 aa). Residues 329–340 are compositionally biased toward basic residues; that stretch reads KAARTKHKKRPK. Over residues 344-359 the composition is skewed to polar residues; sequence QTRTGRTSLKNSSETV. A compositionally biased stretch (basic residues) spans 373–386; that stretch reads PPKKRARCVPRSKA.

This Rattus norvegicus (Rat) protein is Coiled-coil domain-containing protein 71 (Ccdc71).